A 205-amino-acid chain; its full sequence is Ribonuclease HII (205 aa).

Residues 1–203 (MKAGIDEAGK…VSNLRQKTLD (203 aa)) enclose the RNase H type-2 domain. The a divalent metal cation site is built by Asp-6 and Glu-7. Residue Arg-46 coordinates substrate. Position 101 (Asp-101) interacts with a divalent metal cation. Residues Lys-143, Arg-146, and Tyr-164 each contribute to the substrate site.

Belongs to the RNase HII family. Mn(2+) serves as cofactor. Mg(2+) is required as a cofactor.

It localises to the cytoplasm. It carries out the reaction Endonucleolytic cleavage to 5'-phosphomonoester.. Endonuclease that specifically degrades the RNA of RNA-DNA hybrids. This Archaeoglobus fulgidus (strain ATCC 49558 / DSM 4304 / JCM 9628 / NBRC 100126 / VC-16) protein is Ribonuclease HII (rnhB).